We begin with the raw amino-acid sequence, 429 residues long: Gamma-glutamyl phosphate reductase (429 aa).

It belongs to the gamma-glutamyl phosphate reductase family.

The protein localises to the cytoplasm. It carries out the reaction L-glutamate 5-semialdehyde + phosphate + NADP(+) = L-glutamyl 5-phosphate + NADPH + H(+). The protein operates within amino-acid biosynthesis; L-proline biosynthesis; L-glutamate 5-semialdehyde from L-glutamate: step 2/2. Catalyzes the NADPH-dependent reduction of L-glutamate 5-phosphate into L-glutamate 5-semialdehyde and phosphate. The product spontaneously undergoes cyclization to form 1-pyrroline-5-carboxylate. The protein is Gamma-glutamyl phosphate reductase of Methylibium petroleiphilum (strain ATCC BAA-1232 / LMG 22953 / PM1).